We begin with the raw amino-acid sequence, 166 residues long: Orotate phosphoribosyltransferase (166 aa).

5-phospho-alpha-D-ribose 1-diphosphate is bound by residues Arg83, Lys84, Arg86, His88, and 108–116 (EDVVTTGNS). Orotate is bound by residues Thr112 and Arg140.

The protein belongs to the purine/pyrimidine phosphoribosyltransferase family. PyrE subfamily. Homodimer. Mg(2+) serves as cofactor.

The catalysed reaction is orotidine 5'-phosphate + diphosphate = orotate + 5-phospho-alpha-D-ribose 1-diphosphate. The protein operates within pyrimidine metabolism; UMP biosynthesis via de novo pathway; UMP from orotate: step 1/2. Its function is as follows. Catalyzes the transfer of a ribosyl phosphate group from 5-phosphoribose 1-diphosphate to orotate, leading to the formation of orotidine monophosphate (OMP). In Thermoplasma volcanium (strain ATCC 51530 / DSM 4299 / JCM 9571 / NBRC 15438 / GSS1), this protein is Orotate phosphoribosyltransferase.